A 613-amino-acid chain; its full sequence is Protein ECM3 (613 aa).

4 helical membrane passes run 10–30, 74–94, 106–126, and 143–163; these read IWASVRPIIKIYLIIGVGFGL, GIICLTSVILFATGLGFAFIV, GGILAGGMFPNISDLPIAYLQ, and VANVIIFLAMFLICVFNLGGF. A disordered region spans residues 177-256; that stretch reads DEENTLTNDD…PAIDDRSSNS (80 aa). Polar residues-rich tracts occupy residues 187–206 and 213–226; these read SAQQPTQPIEGNSSSSSNQD and ESTVPNSSQASYIS. Phosphoserine is present on residues S291 and S338. A disordered region spans residues 345–366; sequence RRRKSSISSQGAPSVLQADGTI. 4 consecutive transmembrane segments (helical) span residues 432–452, 471–491, 546–566, and 587–607; these read MAVILALIIAFIPWVKALFVT, FIMDFTSYVGAASVPFGLILL, MLLFVTAITWNLPTMTTLIYF, and FLMLQYPLMVVSLPFLVSYFI.

It localises to the endoplasmic reticulum membrane. Functionally, may be involved in cell wall organization and biogenesis. The sequence is that of Protein ECM3 (ECM3) from Saccharomyces cerevisiae (strain ATCC 204508 / S288c) (Baker's yeast).